A 687-amino-acid polypeptide reads, in one-letter code: Methionine--tRNA ligase (687 aa).

The 'HIGH' region motif lies at 14-24; the sequence is PYANGYIHLGH. Zn(2+) is bound by residues C145, C148, C158, and C161. A 'KMSKS' region motif is present at residues 329–333; sequence KMSKS. ATP is bound at residue K332. The region spanning 585 to 687 is the tRNA-binding domain; the sequence is DFDKVDLRIG…DGAQVGQRVK (103 aa).

This sequence belongs to the class-I aminoacyl-tRNA synthetase family. MetG type 1 subfamily. As to quaternary structure, homodimer. Zn(2+) is required as a cofactor.

It is found in the cytoplasm. It carries out the reaction tRNA(Met) + L-methionine + ATP = L-methionyl-tRNA(Met) + AMP + diphosphate. Its function is as follows. Is required not only for elongation of protein synthesis but also for the initiation of all mRNA translation through initiator tRNA(fMet) aminoacylation. The polypeptide is Methionine--tRNA ligase (Bdellovibrio bacteriovorus (strain ATCC 15356 / DSM 50701 / NCIMB 9529 / HD100)).